Here is a 122-residue protein sequence, read N- to C-terminus: Large ribosomal subunit protein uL14c (122 aa).

The protein belongs to the universal ribosomal protein uL14 family. Part of the 50S ribosomal subunit.

It is found in the plastid. It localises to the chloroplast. Binds to 23S rRNA. The sequence is that of Large ribosomal subunit protein uL14c from Chloranthus spicatus (Chulantree).